Reading from the N-terminus, the 1401-residue chain is DNA-directed RNA polymerase subunit beta'' (1401 aa).

Zn(2+)-binding residues include cysteine 224, cysteine 294, cysteine 301, and cysteine 304.

This sequence belongs to the RNA polymerase beta' chain family. RpoC2 subfamily. In plastids the minimal PEP RNA polymerase catalytic core is composed of four subunits: alpha, beta, beta', and beta''. When a (nuclear-encoded) sigma factor is associated with the core the holoenzyme is formed, which can initiate transcription. Requires Zn(2+) as cofactor.

It is found in the plastid. It localises to the chloroplast. It catalyses the reaction RNA(n) + a ribonucleoside 5'-triphosphate = RNA(n+1) + diphosphate. In terms of biological role, DNA-dependent RNA polymerase catalyzes the transcription of DNA into RNA using the four ribonucleoside triphosphates as substrates. This Nymphaea alba (White water-lily) protein is DNA-directed RNA polymerase subunit beta''.